Here is a 470-residue protein sequence, read N- to C-terminus: MHLATETAPSMATYSSTYFNSSLHAHSTSVSSSNLAAMNSLDTHPGYMGNSLNGPRSMTTNMNSMCSPGNNIGLPYRVIASSMGPHSLPSPTILNYPGHESPPFNILNNVSCSEDIKPPPGLSSLGSPCMNNYSCNSPGALTKHICAICGDRSSGKHYGVYSCEGCKGFFKRTIRKDLVYTCRDSKDCLIDKRQRNRCQYCRYQKCLAMGMKREAVQEERQRSREKSDTEAESTSSTSEEMPVERILEAELAVDPKIEAFGDAGLPNSTNDPVTNICHAADKQLFTLVEWAKRIPYFSDLPLEDQVILLRAGWNELLIASFSHRSVSVQDGILLATGLHVHRSSAHNAGVGSIFDRVLTELVSKMKDMDMDKSELGCLRAIVLFNPDAKGLSNAAEVEALREKVYATLESYTKQKYPDQPGRFAKLLLRLPALRSIGLKCLEHLFFFKLIGDTPIDTFLMEMLETPHQIS.

The tract at residues 1–145 is modulating; sequence MHLATETAPS…NSPGALTKHI (145 aa). NR C4-type zinc fingers lie at residues 146–166 and 182–206; these read CAIC…CEGC and CRDS…YQKC. A DNA-binding region (nuclear receptor) is located at residues 146–211; that stretch reads CAICGDRSSG…RYQKCLAMGM (66 aa). Residues 212 to 235 are hinge; it reads KREAVQEERQRSREKSDTEAESTS. The segment covering 217–229 has biased composition (basic and acidic residues); that stretch reads QEERQRSREKSDT. The disordered stretch occupies residues 217-242; the sequence is QEERQRSREKSDTEAESTSSTSEEMP. The NR LBD domain maps to 238–466; sequence SEEMPVERIL…TFLMEMLETP (229 aa).

This sequence belongs to the nuclear hormone receptor family. NR2 subfamily. In terms of assembly, homodimer. Heterodimer; with a rar molecule. Binds DNA preferentially as a rar/rxr heterodimer.

It localises to the nucleus. Functionally, receptor for retinoic acid. Retinoic acid receptors bind as heterodimers to their target response elements in response to their ligands, all-trans or 9-cis retinoic acid, and regulate gene expression in various biological processes. The rar/rxr heterodimers bind to the retinoic acid response elements (RARE) composed of tandem 5'-AGGTCA-3' sites known as DR1-DR5. The high affinity ligand for rxrs is 9-cis retinoic acid. The chain is Retinoic acid receptor RXR-gamma (rxrg) from Xenopus laevis (African clawed frog).